We begin with the raw amino-acid sequence, 313 residues long: Cytochrome c biogenesis protein CcsA (313 aa).

A run of 8 helical transmembrane segments spans residues 13-35 (ISFS…EIAG), 43-63 (GMIA…IYSG), 67-87 (LSNL…IHMI), 96-116 (FLSS…TSGL), 142-162 (MLLS…LLVI), 219-239 (VIGI…VWAN), 252-269 (ETWA…LHTR), and 280-300 (AIVA…VNLL).

This sequence belongs to the CcmF/CycK/Ccl1/NrfE/CcsA family. As to quaternary structure, may interact with Ccs1.

It is found in the plastid. The protein localises to the chloroplast thylakoid membrane. In terms of biological role, required during biogenesis of c-type cytochromes (cytochrome c6 and cytochrome f) at the step of heme attachment. This Amborella trichopoda protein is Cytochrome c biogenesis protein CcsA.